Here is a 720-residue protein sequence, read N- to C-terminus: DNA replication licensing factor mcm7 (720 aa).

The C4-type zinc-finger motif lies at 183 to 210 (CDQCGAETYQPIQSPTFMPLIMCPSREC). Residues 331 to 537 (FYEKLAASIA…NDLRLAQHIT (207 aa)) enclose the MCM domain. Positions 344, 383, 385, 386, 387, 488, 513, and 603 each coordinate ATP. An Arginine finger motif is present at residues 512-515 (SRFD).

Belongs to the MCM family. As to quaternary structure, component of the mcm2-7 complex (RLF-M). The complex forms a toroidal hexameric ring with the proposed subunit order mcm2-mcm6-mcm4-mcm7-mcm3-mcm5. The heterodimer of mmcm3/mcm5 interacts with mcm4, mmcm6, mcm7 and weakly with mcm2. The N-terminus is required for interaction with mmcm3, though this interaction may not be direct, and remains in a complex with mmcm3 throughout the cell cycle. Begins to associate with zmcm6 at the neurula stage. Component of the replisome complex. Component of the CMG helicase complex, composed of the mcm2-7 complex, the GINS complex and cdc45. In terms of processing, ubiquitinated by traip when forks converge following formation of DNA interstrand cross-links. Short ubiquitin chains on mcm7 promote recruitment of DNA glycosylase neil3. If the interstrand cross-link cannot be cleaved by neil3, the ubiquitin chains continue to grow on mcm7, promoting the unloading of the CMG helicase complex by the vcp/p97 ATPase.

It is found in the nucleus. The protein localises to the chromosome. The catalysed reaction is ATP + H2O = ADP + phosphate + H(+). Functionally, acts as a component of the mcm2-7 complex (mcm complex) which is the putative replicative helicase essential for 'once per cell cycle' DNA replication initiation and elongation in eukaryotic cells. The active ATPase sites in the mcm2-7 ring are formed through the interaction surfaces of two neighboring subunits such that a critical structure of a conserved arginine finger motif is provided in trans relative to the ATP-binding site of the Walker A box of the adjacent subunit. The six ATPase active sites, however, are likely to contribute differentially to the complex helicase activity. The existence of maternal and zygotic forms of mcm3 and mcm6 suggests that specific forms of mcm2-7 complexes may be used during different stages of development. The polypeptide is DNA replication licensing factor mcm7 (Xenopus tropicalis (Western clawed frog)).